The sequence spans 333 residues: 1,5-anhydro-D-fructose reductase (333 aa).

Residues 9–12 (ASTI), 33–34 (ST), R38, 71–76 (TTNELH), 93–94 (EK), N120, 162–163 (WR), and Y283 contribute to the NADP(+) site.

In terms of assembly, monomer.

The catalysed reaction is 1,5-anhydro-D-mannitol + NADP(+) = 1,5-anhydro-D-fructose + NADPH + H(+). Catalyzes the NADPH-specific reduction of 1,5-anhydro-D-fructose to 1,5-anhydro-D-mannitol. Also shows some activity against structurally related compounds such as 3-keto-1,5-anhydro-D-fructose, D-glucosone and D-xylosone. The enzyme cannot use NADH as cosubstrate. The chain is 1,5-anhydro-D-fructose reductase (afr) from Ensifer adhaerens (Sinorhizobium morelense).